A 600-amino-acid chain; its full sequence is MEKGTDRMAAAAPAPPAAASQCRSPRCTAERRGVRRELDSWRHRLMHCVGFESILEGLYGPRLRRDLSLFEDCEPEELTDWSMDEKCSFCNLHKETVSDRASVIGSSQSTPTEELSSQGQSNTDKIECQAENYLNALFRKKDLPQNCDPNIPLVAQELMKKMIRQFAIEYISKSSKIQENRNGSSFEPSLICKSIQMNQTENSLQEEQDSPLDLTVNRTQEQNTQQGDGVLDLSTKKSARLEEPKYDPLCSENSVSGRLHRHREDYVERSAEFADGLLSKALKDIQSGALDINKAGILYGIPQKTLLLHLEALPAGKPAPFKNKTRDFNDSYSFKDSKETCAVLQKVALWARAQAERTEKSKLSLLETSELKFPTASSYLHQLTLQRMVTQFKEKSENLQYETTNPTVQLKIPQLRISSVSKPQSDTAGLLDVMYHVSKTSSVLEGSALQKLKNILPKQNKIECSGPVTHSSVDSYFLHGDLSPLCLNAKNGTVDGTSENTEDSLDRKDNKQPRKKRGRYRQYDHEIMEEAIAMVMSGKMSVSKAQGIYGVPHSTLEYKVKERSGTLKTPPKKKLRLPDTGLFNMTDSGTGSCKTSSKPV.

Disordered stretches follow at residues 1–24 (MEKG…QCRS), 102–122 (SVIG…GQSN), and 495–519 (DGTS…KRGR). Over residues 104–122 (IGSSQSTPTEELSSQGQSN) the composition is skewed to polar residues. One can recognise an HTH psq-type domain in the interval 514-566 (RKKRGRYRQYDHEIMEEAIAMVMSGKMSVSKAQGIYGVPHSTLEYKVKERSGT). The H-T-H motif DNA-binding region spans 542 to 562 (VSKAQGIYGVPHSTLEYKVKE). The disordered stretch occupies residues 581 to 600 (GLFNMTDSGTGSCKTSSKPV). A compositionally biased stretch (polar residues) spans 583 to 600 (FNMTDSGTGSCKTSSKPV).

It is found in the nucleus. In terms of biological role, may act as transcription activator that binds DNA elements with the sequence 5'-CCCTATCGATCGATCTCTACCT-3'. This chain is Ligand-dependent nuclear receptor corepressor-like protein (LCORL), found in Gallus gallus (Chicken).